The following is a 292-amino-acid chain: Acetylglutamate kinase (292 aa).

Residues 64 to 65 (GG), arginine 86, and asparagine 190 contribute to the substrate site.

This sequence belongs to the acetylglutamate kinase family. ArgB subfamily.

The protein localises to the cytoplasm. It carries out the reaction N-acetyl-L-glutamate + ATP = N-acetyl-L-glutamyl 5-phosphate + ADP. Its pathway is amino-acid biosynthesis; L-arginine biosynthesis; N(2)-acetyl-L-ornithine from L-glutamate: step 2/4. In terms of biological role, catalyzes the ATP-dependent phosphorylation of N-acetyl-L-glutamate. This chain is Acetylglutamate kinase, found in Leptospira biflexa serovar Patoc (strain Patoc 1 / Ames).